The following is a 78-amino-acid chain: Myrmicitoxin-Ta2a (78 aa).

The signal sequence occupies residues 1–26; that stretch reads MKLSFLSLALAIIFVTVLIYAPQAEA. Residues 27–56 constitute a propeptide that is removed on maturation; the sequence is KALADAVADADADADAAADAVADALADADA. Lys77 is modified (lysine amide).

It belongs to the formicidae venom precursor-01 superfamily. Expressed by the venom gland.

It localises to the secreted. In terms of biological role, peptide with toxicity towards insects that may also act as antimicrobial peptide. Causes calcium influx in F11 cells (EC(50)=5.8 nM), possibly by modulating sodium channels (Nav). In vivo, is lethal to insects, but does not show toxicity to vertebrates. Intraplantar injection into mice does not induce spontaneous nocifensive behaviors up to a dose of 200 pmol. The sequence is that of Myrmicitoxin-Ta2a from Tetramorium africanum (Fierce ant).